A 456-amino-acid polypeptide reads, in one-letter code: UDP-glycosyltransferase 84B1 (456 aa).

Residues serine 278, 332 to 334 (SPQ), 349 to 357 (HCGWNSTME), and 371 to 374 (WTDQ) each bind UDP-alpha-D-glucose.

The protein belongs to the UDP-glycosyltransferase family.

Functionally, possesses low quercetin 7-O-glucosyltransferase activity in vitro. The sequence is that of UDP-glycosyltransferase 84B1 (UGT84B1) from Arabidopsis thaliana (Mouse-ear cress).